We begin with the raw amino-acid sequence, 100 residues long: Urease subunit gamma (100 aa).

The protein belongs to the urease gamma subunit family. In terms of assembly, heterotrimer of UreA (gamma), UreB (beta) and UreC (alpha) subunits. Three heterotrimers associate to form the active enzyme.

The protein localises to the cytoplasm. It carries out the reaction urea + 2 H2O + H(+) = hydrogencarbonate + 2 NH4(+). It participates in nitrogen metabolism; urea degradation; CO(2) and NH(3) from urea (urease route): step 1/1. This chain is Urease subunit gamma, found in Ruegeria sp. (strain TM1040) (Silicibacter sp.).